A 314-amino-acid polypeptide reads, in one-letter code: Melanocyte-stimulating hormone receptor (314 aa).

The Extracellular segment spans residues 1–35; the sequence is MSMLAPLRLVREPWNASEGNQSNATAGAGGAWCQG. N-linked (GlcNAc...) asparagine glycans are attached at residues asparagine 15, asparagine 20, and asparagine 23. The chain crosses the membrane as a helical span at residues 36–61; it reads LDIPNELFLTLGLVSLVENLLVVAAI. Residues 62-70 are Cytoplasmic-facing; it reads LKNRNLHSP. The chain crosses the membrane as a helical span at residues 71-91; the sequence is TYYFICCLAVSDMLVSVSNLA. Topologically, residues 92 to 116 are extracellular; it reads KTLFMLLMEHGVLVIRASIVRHMDN. Residues 117 to 138 form a helical membrane-spanning segment; that stretch reads VIDMLICSSVVSSLSFLGVIAV. At 139-161 the chain is on the cytoplasmic side; the sequence is DRYITIFYALRYHSIMTLQRAVV. The helical transmembrane segment at 162–181 threads the bilayer; sequence TMASVWLASTVSSTVLITYY. At 182-189 the chain is on the extracellular side; that stretch reads RNNAILLC. A helical membrane pass occupies residues 190 to 209; sequence LIGFFLFMLVLMLVLYIHMF. Topologically, residues 210 to 237 are cytoplasmic; the sequence is ALACHHVRSISSQQKQPTIYRTSSLKGA. The chain crosses the membrane as a helical span at residues 238–263; it reads VTLTILLGVFFICWGPFFFHLILIVT. At 264–276 the chain is on the extracellular side; it reads CPTNPFCTCFFSY. The helical transmembrane segment at 277–297 threads the bilayer; the sequence is FNLFLILIICNSVVDPLIYAF. Residues 298–314 lie on the Cytoplasmic side of the membrane; that stretch reads RSQELRRTLREVVLCSW. Cysteine 312 carries the S-palmitoyl cysteine lipid modification.

It belongs to the G-protein coupled receptor 1 family.

The protein localises to the cell membrane. Its function is as follows. Receptor for MSH (alpha, beta and gamma) and ACTH. The activity of this receptor is mediated by G proteins which activate adenylate cyclase. Mediates melanogenesis via regulation of cAMP signaling in melanocytes. This is Melanocyte-stimulating hormone receptor (MC1R) from Gallus gallus (Chicken).